A 165-amino-acid polypeptide reads, in one-letter code: IQSTSMDQGSLTEDSMNSFIRTLIQAGIWKNKVPKQTARTKDGMQTTVKRTKAEAEAVASEGTRLGFQPVVLVDAELLRQQRRFSSPRVLLSENTPLEPPPLYLMEEPAVLNRTSRRKRYAEGKSHRGEYSVCDSESRWVTDKSSAVDIRGHQVTVLGEIRMGPS.

An N-terminal signal peptide occupies residues 1-3 (IQS). Residues 4 to 119 (TSMDQGSLTE…VLNRTSRRKR (116 aa)) constitute a propeptide that is removed on maturation. N-linked (GlcNAc...) asparagine glycosylation is present at asparagine 112.

Belongs to the NGF-beta family.

It localises to the secreted. Functionally, seems to promote the survival of visceral and proprioceptive sensory neurons. This chain is Neurotrophin-3 (NTF3), found in Calabaria reinhardtii (Calabar boa).